We begin with the raw amino-acid sequence, 228 residues long: Uracil-DNA glycosylase (228 aa).

Catalysis depends on Asp-64, which acts as the Proton acceptor.

The protein belongs to the uracil-DNA glycosylase (UDG) superfamily. UNG family.

The protein resides in the cytoplasm. The catalysed reaction is Hydrolyzes single-stranded DNA or mismatched double-stranded DNA and polynucleotides, releasing free uracil.. Functionally, excises uracil residues from the DNA which can arise as a result of misincorporation of dUMP residues by DNA polymerase or due to deamination of cytosine. In Yersinia pseudotuberculosis serotype O:1b (strain IP 31758), this protein is Uracil-DNA glycosylase.